Reading from the N-terminus, the 292-residue chain is Elongation factor Ts (292 aa).

Residues 80–83 (TDFV) are involved in Mg(2+) ion dislocation from EF-Tu.

It belongs to the EF-Ts family.

Its subcellular location is the cytoplasm. Functionally, associates with the EF-Tu.GDP complex and induces the exchange of GDP to GTP. It remains bound to the aminoacyl-tRNA.EF-Tu.GTP complex up to the GTP hydrolysis stage on the ribosome. The sequence is that of Elongation factor Ts from Psychrobacter sp. (strain PRwf-1).